A 118-amino-acid polypeptide reads, in one-letter code: Succinate dehydrogenase assembly factor 1, mitochondrial (118 aa).

The short motif at 14 to 16 is the LYR motif 1; required for interaction with HSC20 element; it reads LYR. The short motif at 53–55 is the LYR motif 2; not required for interaction with HSC20 element; it reads LYR. An interaction with SDHB region spans residues 53-65; sequence LYRRGRRQLQLLR. The disordered stretch occupies residues 68-118; it reads HATAMGTFVRPRGPAEEPGDATAPGTRLDDGGAPKNSCEDTGARETRSDGR. The segment covering 94–118 has biased composition (basic and acidic residues); sequence RLDDGGAPKNSCEDTGARETRSDGR.

This sequence belongs to the complex I LYR family. SDHAF1 subfamily. In terms of assembly, interacts with SDHB within an SDHA-SDHB subcomplex. Also interacts with the iron-sulfur transfer complex formed by HSC20, HSPA9 and ISCU through direct binding to HSC20. Binding of SDHAF1 to SDHB precedes and is necessary for recruitment of the iron-sulfur transfer complex by SDHAF1.

The protein resides in the mitochondrion matrix. In terms of biological role, plays an essential role in the assembly of succinate dehydrogenase (SDH), an enzyme complex (also referred to as respiratory complex II) that is a component of both the tricarboxylic acid (TCA) cycle and the mitochondrial electron transport chain, and which couples the oxidation of succinate to fumarate with the reduction of ubiquinone (coenzyme Q) to ubiquinol. Promotes maturation of the iron-sulfur protein subunit Sdhb of the SDH catalytic dimer, protecting it from the deleterious effects of oxidants. May act together with SDHAF3. Contributes to iron-sulfur cluster incorporation into SDHB by binding to SDHB and recruiting the iron-sulfur transfer complex formed by HSC20, HSPA9 and ISCU through direct binding to HSC20. The protein is Succinate dehydrogenase assembly factor 1, mitochondrial of Mus musculus (Mouse).